The sequence spans 352 residues: Alanine racemase (352 aa).

Lys33 serves as the catalytic Proton acceptor; specific for D-alanine. Lys33 is modified (N6-(pyridoxal phosphate)lysine). Arg129 provides a ligand contact to substrate. Catalysis depends on Tyr250, which acts as the Proton acceptor; specific for L-alanine. Met298 is a binding site for substrate.

It belongs to the alanine racemase family. Pyridoxal 5'-phosphate is required as a cofactor.

The enzyme catalyses L-alanine = D-alanine. It participates in amino-acid biosynthesis; D-alanine biosynthesis; D-alanine from L-alanine: step 1/1. Functionally, catalyzes the interconversion of L-alanine and D-alanine. May also act on other amino acids. This is Alanine racemase (alr) from Neisseria meningitidis serogroup C / serotype 2a (strain ATCC 700532 / DSM 15464 / FAM18).